The sequence spans 510 residues: Global transcription regulator sge1 (510 aa).

Disordered regions lie at residues 94–152, 393–438, and 469–510; these read PPGE…ASRN, HPFM…QQHS, and LGGT…MGRL. A compositionally biased stretch (low complexity) spans 123–143; it reads NTGMNGTATGANAANLSSAGS. 2 stretches are compositionally biased toward polar residues: residues 471–480 and 501–510; these read GTNTDQSQPF and PGSNNSMGRL.

Belongs to the MIT1/WOR1 family.

The protein localises to the nucleus. In terms of biological role, global transcriptional regulator of pathogenicity. Differentially regulates expression of effector genes. Also required for radial growth and production of asexual conidiospores, and plays a role in mycelium pigmentation. Not required for induction of Ave1, the effector that activates resistance mediated by the Ve1 immune receptor in tomato. The chain is Global transcription regulator sge1 from Verticillium dahliae (strain VdLs.17 / ATCC MYA-4575 / FGSC 10137) (Verticillium wilt).